We begin with the raw amino-acid sequence, 667 residues long: Bifunctional polymyxin resistance protein ArnA (667 aa).

The formyltransferase ArnAFT stretch occupies residues 1 to 304 (MKAIVFAYHD…EMGIVTDVRL (304 aa)). The active-site Proton donor; for formyltransferase activity is His104. Residues Arg114 and 136 to 140 (VKKAD) contribute to the (6R)-10-formyltetrahydrofolate site. Residues 314–667 (RRTRVLILGV…TAAPKDELNA (354 aa)) are dehydrogenase ArnADH. NAD(+) is bound by residues Asp347 and 368 to 369 (DI). UDP-alpha-D-glucuronate contacts are provided by residues Ala393, Tyr398, and 432–433 (TS). Glu434 serves as the catalytic Proton acceptor; for decarboxylase activity. UDP-alpha-D-glucuronate is bound by residues Arg460, Asn492, 526-535 (KLVDGGAQKR), and Tyr613. The Proton donor; for decarboxylase activity role is filled by Arg619.

The protein in the N-terminal section; belongs to the Fmt family. UDP-L-Ara4N formyltransferase subfamily. This sequence in the C-terminal section; belongs to the NAD(P)-dependent epimerase/dehydratase family. UDP-glucuronic acid decarboxylase subfamily. Homohexamer, formed by a dimer of trimers.

The enzyme catalyses UDP-alpha-D-glucuronate + NAD(+) = UDP-beta-L-threo-pentopyranos-4-ulose + CO2 + NADH. It catalyses the reaction UDP-4-amino-4-deoxy-beta-L-arabinose + (6R)-10-formyltetrahydrofolate = UDP-4-deoxy-4-formamido-beta-L-arabinose + (6S)-5,6,7,8-tetrahydrofolate + H(+). The protein operates within nucleotide-sugar biosynthesis; UDP-4-deoxy-4-formamido-beta-L-arabinose biosynthesis; UDP-4-deoxy-4-formamido-beta-L-arabinose from UDP-alpha-D-glucuronate: step 1/3. It functions in the pathway nucleotide-sugar biosynthesis; UDP-4-deoxy-4-formamido-beta-L-arabinose biosynthesis; UDP-4-deoxy-4-formamido-beta-L-arabinose from UDP-alpha-D-glucuronate: step 3/3. It participates in bacterial outer membrane biogenesis; lipopolysaccharide biosynthesis. Bifunctional enzyme that catalyzes the oxidative decarboxylation of UDP-glucuronic acid (UDP-GlcUA) to UDP-4-keto-arabinose (UDP-Ara4O) and the addition of a formyl group to UDP-4-amino-4-deoxy-L-arabinose (UDP-L-Ara4N) to form UDP-L-4-formamido-arabinose (UDP-L-Ara4FN). The modified arabinose is attached to lipid A and is required for resistance to polymyxin and cationic antimicrobial peptides. In Yersinia pseudotuberculosis serotype O:3 (strain YPIII), this protein is Bifunctional polymyxin resistance protein ArnA.